Reading from the N-terminus, the 246-residue chain is Envelope glycoprotein gp95 (246 aa).

The Extracellular portion of the chain corresponds to Ile1–Leu192. The N-linked (GlcNAc...) asparagine; by host glycan is linked to Asn31. A disulfide bridge links Cys50 with Cys86. Residues Gly58 to Leu78 form a fusion peptide region. The stretch at Ala75 to Leu125 forms a coiled coil. An N-linked (GlcNAc...) asparagine; by host glycan is attached at Asn93. The tract at residues Leu114–Gly130 is immunosuppression. Cys131 and Cys138 are disulfide-bonded. Asn141 is a glycosylation site (N-linked (GlcNAc...) asparagine; by host). Residues Ser143–Trp173 adopt a coiled-coil conformation. The chain crosses the membrane as a helical span at residues Leu193–Val213. S-palmitoyl cysteine; by host attachment occurs at residues Cys205 and Cys208. Residues Cys214–Val246 are Cytoplasmic-facing.

Belongs to the Alpharetroviruses envelope glycoprotein family. Heterodimer with the transmembrane protein. The mature envelope protein (Env) consists of a trimer of SU-TM heterodimers attached by a labile interchain disulfide bond. As to quaternary structure, heterodimer with the surface protein. The mature envelope protein (Env) consists of a trimer of SU-TM heterodimers attached by a labile interchain disulfide bond. Specific enzymatic cleavages in vivo yield mature proteins. Envelope glycoproteins are synthesized as an inactive precursor that is N-glycosylated and processed likely by host cell furin or by a furin-like protease in the Golgi to yield the mature SU and TM proteins. The cleavage site between SU and TM requires the minimal sequence [KR]-X-[KR]-R. In terms of processing, the transmembrane protein is palmitoylated. Palmitoylation is necessary for glycoprotein function and infectivity.

The protein localises to the virion membrane. The protein resides in the host cell membrane. Functionally, the surface protein (SU) attaches the virus to the host cell by binding to its receptor. This interaction triggers the refolding of the transmembrane protein (TM) thereby unmasking its fusion peptide and the formation of a reactive thiolate to activate its fusogenic potential. Fusion occurs at the host cell plasma membrane. Its function is as follows. The transmembrane protein (TM) acts as a class I viral fusion protein. Under the current model, the protein has at least 3 conformational states: pre-fusion native state, pre-hairpin intermediate state, and post-fusion hairpin state. During viral and target cell membrane fusion, the coiled coil regions (heptad repeats) assume a trimer-of-hairpins structure, positioning the fusion peptide in close proximity to the C-terminal region of the ectodomain. The formation of this structure appears to drive apposition and subsequent fusion of viral and target cell membranes. Membranes fusion leads to delivery of the nucleocapsid into the cytoplasm. The sequence is that of Envelope glycoprotein gp95 (env) from Galliformes.